The sequence spans 343 residues: Probable dual-specificity RNA methyltransferase RlmN (343 aa).

Glu-92 acts as the Proton acceptor in catalysis. The Radical SAM core domain occupies 98–328 (YHHGLTACIS…TTVRREMGAD (231 aa)). Residues Cys-105 and Cys-333 are joined by a disulfide bond. 3 residues coordinate [4Fe-4S] cluster: Cys-112, Cys-116, and Cys-119. S-adenosyl-L-methionine is bound by residues 159–160 (GE), Ser-191, 214–216 (SLH), and Asn-290. The S-methylcysteine intermediate role is filled by Cys-333.

The protein belongs to the radical SAM superfamily. RlmN family. [4Fe-4S] cluster serves as cofactor.

It is found in the cytoplasm. It carries out the reaction adenosine(2503) in 23S rRNA + 2 reduced [2Fe-2S]-[ferredoxin] + 2 S-adenosyl-L-methionine = 2-methyladenosine(2503) in 23S rRNA + 5'-deoxyadenosine + L-methionine + 2 oxidized [2Fe-2S]-[ferredoxin] + S-adenosyl-L-homocysteine. The catalysed reaction is adenosine(37) in tRNA + 2 reduced [2Fe-2S]-[ferredoxin] + 2 S-adenosyl-L-methionine = 2-methyladenosine(37) in tRNA + 5'-deoxyadenosine + L-methionine + 2 oxidized [2Fe-2S]-[ferredoxin] + S-adenosyl-L-homocysteine. Specifically methylates position 2 of adenine 2503 in 23S rRNA and position 2 of adenine 37 in tRNAs. This chain is Probable dual-specificity RNA methyltransferase RlmN, found in Alkaliphilus oremlandii (strain OhILAs) (Clostridium oremlandii (strain OhILAs)).